We begin with the raw amino-acid sequence, 2454 residues long: Probable serine/threonine-protein kinase DDB_G0277071 (2454 aa).

The segment covering threonine 31–threonine 51 has biased composition (low complexity). Disordered regions lie at residues threonine 31–asparagine 57, glutamine 206–asparagine 265, proline 340–glutamate 612, asparagine 963–glutamate 1051, serine 1201–leucine 1330, and isoleucine 1342–threonine 1528. The stretch at lysine 259 to glutamate 307 forms a coiled coil. Low complexity-rich tracts occupy residues glutamine 346–proline 399 and proline 406–serine 428. A compositionally biased stretch (polar residues) spans isoleucine 429 to glutamine 444. Composition is skewed to low complexity over residues asparagine 450–asparagine 461 and serine 475–asparagine 536. Residues glycine 553–isoleucine 568 show a composition bias toward gly residues. Low complexity-rich tracts occupy residues asparagine 963 to asparagine 1048, serine 1201 to proline 1248, asparagine 1275 to serine 1284, serine 1299 to glycine 1324, and serine 1346 to threonine 1403. The segment covering leucine 1417–isoleucine 1441 has biased composition (polar residues). The segment covering proline 1442–serine 1478 has biased composition (low complexity). A compositionally biased stretch (polar residues) spans threonine 1479–isoleucine 1491. The segment covering serine 1509–threonine 1528 has biased composition (low complexity). The Protein kinase domain maps to phenylalanine 1730–isoleucine 2034. Residues valine 1736–valine 1744 and lysine 1760 contribute to the ATP site. Aspartate 1858 acts as the Proton acceptor in catalysis. Residues arginine 2130–asparagine 2271 enclose the Tyrosine-protein phosphatase domain. Residues asparagine 2379–asparagine 2404 are disordered.

This sequence belongs to the protein kinase superfamily. Ser/Thr protein kinase family.

It carries out the reaction L-seryl-[protein] + ATP = O-phospho-L-seryl-[protein] + ADP + H(+). The enzyme catalyses L-threonyl-[protein] + ATP = O-phospho-L-threonyl-[protein] + ADP + H(+). This Dictyostelium discoideum (Social amoeba) protein is Probable serine/threonine-protein kinase DDB_G0277071.